Here is a 115-residue protein sequence, read N- to C-terminus: U3-lycotoxin-Ls1a (115 aa).

The first 20 residues, 1–20, serve as a signal peptide directing secretion; it reads MKFVLLFGVLLVTLFSYSSA. Positions 21 to 44 are excised as a propeptide; the sequence is EMLDDFDQADEDELLSLIEKEEAR. 4 disulfides stabilise this stretch: Cys48–Cys63, Cys55–Cys72, Cys62–Cys87, and Cys74–Cys85.

Belongs to the neurotoxin 19 (CSTX) family. 01 subfamily. In terms of tissue distribution, expressed by the venom gland.

Its subcellular location is the secreted. This chain is U3-lycotoxin-Ls1a, found in Lycosa singoriensis (Wolf spider).